Reading from the N-terminus, the 582-residue chain is Leucine-rich repeat protein SHOC-2 (582 aa).

Composition is skewed to basic and acidic residues over residues 1-29 (MSSSLGKEKDSKEKDPKVPSAKEREKEAK) and 36-57 (KESKEKEPKTKGKDAKDGKKDS). The tract at residues 1–88 (MSSSLGKEKD…PGTRKKSSNA (88 aa)) is disordered. Residues 63-66 (GVAF) carry the RVxF motif; important for interaction with PP1c motif. LRR repeat units follow at residues 101–122 (NSMRLDLSKRSIHILPSSIKEL), 124–145 (QLTELYLYSNKLQSLPAEVGCL), 147–169 (NLMTLALSENSLTSLPDSLDNLK), 170–191 (KLRMLDLRHNKLREIPSVVYRL), 193–214 (SLTTLYLRFNRITTVEKDIKNL), 216–237 (KLSMLSIRENKIKQLPAEIGEL), 239–260 (NLITLDVAHNQLEHLPKEIGNC), 262–283 (QITNLDLQHNELLDLPDTIGNL), 285–307 (SLSRLGLRYNRLSAIPRSLAKCS), 308–329 (ALEELNLENNNISTLPESLLSS), 332–353 (KLNSLTLARNCFQLYPVGGPSQ), 356–377 (TIYSLNMEHNRINKIPFGIFSR), 380–400 (VLSKLNMKDNQLTSLPLDFGT), 403–424 (SMVELNLATNQLTKIPEDVSGL), 426–448 (SLEVLILSNNLLKKLPHGLGNLR), 449–470 (KLRELDLEENKLESLPNEIAYL), 472–494 (DLQKLVLTNNQLTTLPRGIGHLT), 495–516 (NLTHLGLGENLLTHLPEEIGTL), 518–540 (NLEELYLNDNPNLHSLPFELALC), and 542–563 (KLSIMSIENCPLSHLPPQIVAG).

The protein belongs to the SHOC2 family. In terms of assembly, component of the SHOC2-MRAS-PP1c (SMP) complex consisting of SHOC2, GTP-bound M-Ras/MRAS and the catalytic subunit of protein phosphatase 1 (either PPP1CA, PPP1CB or PPP1CC). SHOC2 and PP1c preferably bind M-Ras/MRAS, but they also bind K-Ras/KRAS, N-Ras/NRAS and H-Ras/HRAS; these interactions are GTP-dependent and both SHOC2 and PP1c are required to form a stable complex. Interacts with PP1c in the absence of Ras GTPases. Interacts with M-Ras/MRAS and RAF1. Interacts with ERBIN; disrupts the interaction with RAF1 and Ras, preventing the activation of the Ras signaling pathway. Interacts with LZTR1.

It is found in the cytoplasm. The protein resides in the nucleus. Its function is as follows. Core component of the SHOC2-MRAS-PP1c (SMP) holophosphatase complex that regulates activation of the MAPK pathway. Acts as a scaffolding protein in the SMP complex. The SMP complex specifically dephosphorylates the inhibitory phosphorylation at 'Ser-259' of RAF1 kinase, 'Ser-365' of BRAF kinase and 'Ser-214' of ARAF kinase, stimulating their kinase activities. The SMP complex enhances the dephosphorylation activity and substrate specificity of PP1c. The protein is Leucine-rich repeat protein SHOC-2 (SHOC2) of Homo sapiens (Human).